A 142-amino-acid polypeptide reads, in one-letter code: Hemoglobin cathodic subunit alpha (142 aa).

An N-acetylserine modification is found at Ser1. The region spanning 1–142 (SLTAKDKALV…LSSTAADKYR (142 aa)) is the Globin domain. His59 lines the O2 pocket. His88 contributes to the heme b binding site.

Belongs to the globin family. As to quaternary structure, heterotetramer of two alpha chains and two beta chains.

Involved in oxygen transport from gills to the various peripheral tissues. The polypeptide is Hemoglobin cathodic subunit alpha (Hoplosternum littorale (Hassar)).